A 65-amino-acid chain; its full sequence is Large ribosomal subunit protein bL35 (65 aa).

The tract at residues 1 to 52 (MPKIKTNRGAAKRFKRTGSGGFKCVQSHRRHILTKKSTKRKRQLRSPDMVHP) is disordered. The segment covering 26–44 (QSHRRHILTKKSTKRKRQL) has biased composition (basic residues).

It belongs to the bacterial ribosomal protein bL35 family.

The chain is Large ribosomal subunit protein bL35 from Methylococcus capsulatus (strain ATCC 33009 / NCIMB 11132 / Bath).